A 308-amino-acid chain; its full sequence is Glutaminase (308 aa).

Serine 66, asparagine 117, glutamate 161, asparagine 168, tyrosine 192, tyrosine 244, and valine 262 together coordinate substrate.

Belongs to the glutaminase family. In terms of assembly, homotetramer.

The catalysed reaction is L-glutamine + H2O = L-glutamate + NH4(+). The chain is Glutaminase from Salmonella choleraesuis (strain SC-B67).